Here is a 199-residue protein sequence, read N- to C-terminus: Fe/S biogenesis protein NfuA (199 aa).

[4Fe-4S] cluster is bound by residues cysteine 156 and cysteine 159.

It belongs to the NfuA family. Homodimer. The cofactor is [4Fe-4S] cluster.

In terms of biological role, involved in iron-sulfur cluster biogenesis. Binds a 4Fe-4S cluster, can transfer this cluster to apoproteins, and thereby intervenes in the maturation of Fe/S proteins. Could also act as a scaffold/chaperone for damaged Fe/S proteins. The polypeptide is Fe/S biogenesis protein NfuA (Actinobacillus pleuropneumoniae serotype 5b (strain L20)).